Here is a 133-residue protein sequence, read N- to C-terminus: Classical arabinogalactan protein 5 (133 aa).

The signal sequence occupies residues 1 to 21; it reads MASKSVVVFLFLALVASSVVA. Pyrrolidone carboxylic acid is present on Gln22. Residues 23 to 110 form a disordered region; the sequence is APGPAPTISP…QSPLSGSPNA (88 aa). Residues 25-37 show a composition bias toward pro residues; the sequence is GPAPTISPLPATP. Low complexity predominate over residues 38-48; the sequence is TPSQSPRATAP. Residues 49-81 are compositionally biased toward pro residues; it reads APSPSANPPPSAPTTAPPVSQPPTESPPAPPTS. Residue Asn109 is the site of GPI-anchor amidated asparagine attachment. Residues 110 to 133 constitute a propeptide, removed in mature form; sequence AAAVSRVSLVGTFAGVAVIAALLL.

The protein belongs to the classical AGP family. O-glycosylated on the hydroxyproline residues. Expressed at a low level in flowers and siliques.

The protein resides in the cell membrane. Proteoglycan that seems to be implicated in diverse developmental roles such as differentiation, cell-cell recognition, embryogenesis and programmed cell death. The protein is Classical arabinogalactan protein 5 (AGP5) of Arabidopsis thaliana (Mouse-ear cress).